Here is an 857-residue protein sequence, read N- to C-terminus: Protein STICHEL-like 2 (857 aa).

280-287 (GPRGTGKT) lines the ATP pocket. 4 residues coordinate Zn(2+): Cys299, Cys309, Cys312, and Cys315. Residues 544–576 (LTRHTSEEEMQKLRNALKILSDAEKHLRASKNQ) adopt a coiled-coil conformation. 2 disordered regions span residues 593–629 (SSFA…DAEK) and 787–845 (ASSR…SSRL). Residues 599–610 (ENGRNQINKDVE) show a composition bias toward basic and acidic residues. Residues 834–843 (QSETQNSKSS) are compositionally biased toward polar residues.

The protein belongs to the DnaX/STICHEL family.

The chain is Protein STICHEL-like 2 from Arabidopsis thaliana (Mouse-ear cress).